We begin with the raw amino-acid sequence, 272 residues long: 4-hydroxy-tetrahydrodipicolinate reductase (272 aa).

NAD(+) contacts are provided by residues 12-17 (GAAGRM) and Glu-38. NADP(+) is bound at residue Arg-39. NAD(+) is bound by residues 102–104 (GTT) and 126–129 (SGNM). His-160 serves as the catalytic Proton donor/acceptor. Position 161 (His-161) interacts with (S)-2,3,4,5-tetrahydrodipicolinate. Lys-164 (proton donor) is an active-site residue. (S)-2,3,4,5-tetrahydrodipicolinate is bound at residue 170 to 171 (GT).

The protein belongs to the DapB family.

The protein resides in the cytoplasm. It catalyses the reaction (S)-2,3,4,5-tetrahydrodipicolinate + NAD(+) + H2O = (2S,4S)-4-hydroxy-2,3,4,5-tetrahydrodipicolinate + NADH + H(+). The catalysed reaction is (S)-2,3,4,5-tetrahydrodipicolinate + NADP(+) + H2O = (2S,4S)-4-hydroxy-2,3,4,5-tetrahydrodipicolinate + NADPH + H(+). It functions in the pathway amino-acid biosynthesis; L-lysine biosynthesis via DAP pathway; (S)-tetrahydrodipicolinate from L-aspartate: step 4/4. Catalyzes the conversion of 4-hydroxy-tetrahydrodipicolinate (HTPA) to tetrahydrodipicolinate. In Sinorhizobium fredii (strain NBRC 101917 / NGR234), this protein is 4-hydroxy-tetrahydrodipicolinate reductase.